Consider the following 298-residue polypeptide: Lipoyl synthase (298 aa).

Residues C43, C48, C54, C69, C73, C76, and S280 each contribute to the [4Fe-4S] cluster site. One can recognise a Radical SAM core domain in the interval 55–269 (FSSGTATFLI…AACGRGMGIP (215 aa)).

It belongs to the radical SAM superfamily. Lipoyl synthase family. It depends on [4Fe-4S] cluster as a cofactor.

Its subcellular location is the cytoplasm. It carries out the reaction [[Fe-S] cluster scaffold protein carrying a second [4Fe-4S](2+) cluster] + N(6)-octanoyl-L-lysyl-[protein] + 2 oxidized [2Fe-2S]-[ferredoxin] + 2 S-adenosyl-L-methionine + 4 H(+) = [[Fe-S] cluster scaffold protein] + N(6)-[(R)-dihydrolipoyl]-L-lysyl-[protein] + 4 Fe(3+) + 2 hydrogen sulfide + 2 5'-deoxyadenosine + 2 L-methionine + 2 reduced [2Fe-2S]-[ferredoxin]. It participates in protein modification; protein lipoylation via endogenous pathway; protein N(6)-(lipoyl)lysine from octanoyl-[acyl-carrier-protein]: step 2/2. Its function is as follows. Catalyzes the radical-mediated insertion of two sulfur atoms into the C-6 and C-8 positions of the octanoyl moiety bound to the lipoyl domains of lipoate-dependent enzymes, thereby converting the octanoylated domains into lipoylated derivatives. This Nitratidesulfovibrio vulgaris (strain ATCC 29579 / DSM 644 / CCUG 34227 / NCIMB 8303 / VKM B-1760 / Hildenborough) (Desulfovibrio vulgaris) protein is Lipoyl synthase.